The following is a 528-amino-acid chain: Equilibrative nucleoside transporter 4 (528 aa).

Residues methionine 1 to histidine 68 lie on the Extracellular side of the membrane. The helical transmembrane segment at alanine 69–isoleucine 89 threads the bilayer. The Cytoplasmic segment spans residues threonine 90 to glycine 101. The helical transmembrane segment at threonine 102–leucine 122 threads the bilayer. Residues asparagine 123–glycine 139 lie on the Extracellular side of the membrane. A helical membrane pass occupies residues tyrosine 140–phenylalanine 160. The Cytoplasmic segment spans residues serine 161–tyrosine 166. A helical transmembrane segment spans residues alanine 167 to phenylalanine 187. Over tyrosine 188 to threonine 231 the chain is Extracellular. The chain crosses the membrane as a helical span at residues isoleucine 232–valine 252. At arginine 253–arginine 346 the chain is on the cytoplasmic side. Residues valine 347–proline 367 form a helical membrane-spanning segment. Residues glycine 368–cysteine 376 are Extracellular-facing. A helical transmembrane segment spans residues valine 377–glycine 397. Residues lysine 398–histidine 411 lie on the Cytoplasmic side of the membrane. A helical transmembrane segment spans residues leucine 412–proline 432. The Extracellular portion of the chain corresponds to serine 433–cysteine 445. The chain crosses the membrane as a helical span at residues valine 446 to alanine 466. Residues alanine 467–threonine 481 are Cytoplasmic-facing. A helical membrane pass occupies residues methionine 482–threonine 504. Residues arginine 505 to proline 528 lie on the Extracellular side of the membrane. Asparagine 521 carries N-linked (GlcNAc...) asparagine glycosylation.

The protein belongs to the SLC29A/ENT transporter (TC 2.A.57) family. Post-translationally, N-glycosylated. Expressed in heart. Expressed in choroid plexus.

Its subcellular location is the cell membrane. The protein resides in the apical cell membrane. The enzyme catalyses serotonin(out) = serotonin(in). It catalyses the reaction dopamine(out) = dopamine(in). It carries out the reaction (R)-noradrenaline(out) = (R)-noradrenaline(in). The catalysed reaction is (R)-adrenaline(out) = (R)-adrenaline(in). The enzyme catalyses histamine(out) = histamine(in). It catalyses the reaction tyramine(in) = tyramine(out). It carries out the reaction guanidine(out) = guanidine(in). The catalysed reaction is adenine(out) = adenine(in). The enzyme catalyses adenosine(in) = adenosine(out). Activated at acidic pH. Functionally, electrogenic voltage-dependent transporter that mediates the transport of a variety of endogenous bioactive amines, cationic xenobiotics and drugs. Utilizes the physiologic inside-negative membrane potential as a driving force to facilitate cellular uptake of organic cations. Functions as a Na(+)- and Cl(-)-independent bidirectional transporter. Substrate transport is pH-dependent and enhanced under acidic condition, which is most likely the result of allosteric changes in the transporter structure. Implicated in monoamine neurotransmitters uptake such as serotonin, dopamine, adrenaline/epinephrine, noradrenaline/norepinephrine, histamine and tyramine, thereby supporting a role in homeostatic regulation of aminergic neurotransmission in the central nervous system. Also responsible for the uptake of bioactive amines and drugs through the blood-cerebrospinal fluid (CSF) barrier, from the CSF into choroid plexus epithelial cells, thereby playing a significant role in the clearance of cationic neurotoxins, xenobiotics and metabolic waste in the brain. Involved in bidirectional transport of the purine nucleoside adenosine and plays a role in the regulation of extracellular adenosine concentrations in cardiac tissues, in particular during ischemia. May be involved in organic cation uptake from the tubular lumen into renal tubular cells, thereby contributing to organic cation reabsorption in the kidney. Also transports adenine and guanidine. The protein is Equilibrative nucleoside transporter 4 of Mus musculus (Mouse).